The primary structure comprises 364 residues: Zinc finger protein 474 (364 aa).

A compositionally biased stretch (basic residues) spans 1 to 10 (MERGKKKRIS). 2 disordered regions span residues 1–21 (MERG…HHSK) and 37–60 (SYSS…DTQK). The C2HC/C3H-type 1 zinc-finger motif lies at 93-122 (GFRVCYICGREFGSQSIAIHEPQCLQKWHI). 4 residues coordinate Zn(2+): Cys97, Cys100, His112, and Cys116. The disordered stretch occupies residues 127–147 (LPKHLRRPEPSKPQSLSSSGS). A compositionally biased stretch (low complexity) spans 138–147 (KPQSLSSSGS). 3 consecutive C2HC/C3H-type zinc fingers follow at residues 164–193 (QLLP…KGEG), 220–249 (RTVI…KWKM), and 283–312 (QLVF…HPYG). 12 residues coordinate Zn(2+): Cys168, Cys171, His183, Cys187, Cys224, Cys227, His239, Cys243, Cys287, Cys290, His302, and Cys306. A disordered region spans residues 187 to 214 (CKPKGEGPRAPHSNSSDHLTGLKKACSG).

The cofactor is Zn(2+).

This Homo sapiens (Human) protein is Zinc finger protein 474 (ZNF474).